Reading from the N-terminus, the 84-residue chain is MKQEIQKGDVATLSFEQALKQLEVIVENLERGDVPLEQSIDIYERGEALKKHCEKLLKAAEAKVEKIQLSEGGTPEGVEPLDSE.

Belongs to the XseB family. Heterooligomer composed of large and small subunits.

It is found in the cytoplasm. The enzyme catalyses Exonucleolytic cleavage in either 5'- to 3'- or 3'- to 5'-direction to yield nucleoside 5'-phosphates.. In terms of biological role, bidirectionally degrades single-stranded DNA into large acid-insoluble oligonucleotides, which are then degraded further into small acid-soluble oligonucleotides. This chain is Exodeoxyribonuclease 7 small subunit, found in Bartonella henselae (strain ATCC 49882 / DSM 28221 / CCUG 30454 / Houston 1) (Rochalimaea henselae).